Reading from the N-terminus, the 557-residue chain is DNA ligase B (557 aa).

The active-site N6-AMP-lysine intermediate is the Lys125.

It belongs to the NAD-dependent DNA ligase family. LigB subfamily.

It carries out the reaction NAD(+) + (deoxyribonucleotide)n-3'-hydroxyl + 5'-phospho-(deoxyribonucleotide)m = (deoxyribonucleotide)n+m + AMP + beta-nicotinamide D-nucleotide.. Functionally, catalyzes the formation of phosphodiester linkages between 5'-phosphoryl and 3'-hydroxyl groups in double-stranded DNA using NAD as a coenzyme and as the energy source for the reaction. This Pseudomonas entomophila (strain L48) protein is DNA ligase B.